The sequence spans 288 residues: Pantothenate synthetase (288 aa).

30-37 (MGFLHEGH) provides a ligand contact to ATP. H37 functions as the Proton donor in the catalytic mechanism. Q61 lines the (R)-pantoate pocket. Beta-alanine is bound at residue Q61. 147–150 (GMKD) provides a ligand contact to ATP. Q153 provides a ligand contact to (R)-pantoate. 184–187 (KSSR) serves as a coordination point for ATP.

The protein belongs to the pantothenate synthetase family. As to quaternary structure, homodimer.

The protein resides in the cytoplasm. The enzyme catalyses (R)-pantoate + beta-alanine + ATP = (R)-pantothenate + AMP + diphosphate + H(+). It participates in cofactor biosynthesis; (R)-pantothenate biosynthesis; (R)-pantothenate from (R)-pantoate and beta-alanine: step 1/1. Its function is as follows. Catalyzes the condensation of pantoate with beta-alanine in an ATP-dependent reaction via a pantoyl-adenylate intermediate. The polypeptide is Pantothenate synthetase (Bacillus licheniformis (strain ATCC 14580 / DSM 13 / JCM 2505 / CCUG 7422 / NBRC 12200 / NCIMB 9375 / NCTC 10341 / NRRL NRS-1264 / Gibson 46)).